The sequence spans 86 residues: Large ribosomal subunit protein bL27 (86 aa).

The segment at 1–22 (MAHKKAGGSTRNGRDSESKRLG) is disordered.

Belongs to the bacterial ribosomal protein bL27 family.

In Vibrio cholerae serotype O1 (strain ATCC 39315 / El Tor Inaba N16961), this protein is Large ribosomal subunit protein bL27.